A 152-amino-acid polypeptide reads, in one-letter code: MSAICVIKGDGVDGIINFKQNDNKSPVIISGVISGLKEGKHGFHVHEFGDTTNGCLSAGAHFNPFKKEHGSPNDENRHVGDLGNIESNKDKKSIINITDNIITLFGQNSIIGRSIVVHDKEDDLGRGNSQDSKITGNAGSRLGCGIIALSKI.

Histidine 44, histidine 46, and histidine 61 together coordinate Cu cation. Cysteine 55 and cysteine 144 form a disulfide bridge. Residues histidine 61, histidine 69, histidine 78, and aspartate 81 each coordinate Zn(2+). Position 118 (histidine 118) interacts with Cu cation.

This sequence belongs to the Cu-Zn superoxide dismutase family. Cu cation serves as cofactor. Requires Zn(2+) as cofactor.

It carries out the reaction 2 superoxide + 2 H(+) = H2O2 + O2. Destroys radicals which are normally produced within the cells and which are toxic to biological systems. The polypeptide is Superoxide dismutase [Cu-Zn] 5 (sodE) (Dictyostelium discoideum (Social amoeba)).